Here is a 148-residue protein sequence, read N- to C-terminus: Transcriptional regulator MraZ (148 aa).

SpoVT-AbrB domains lie at 5-51 and 80-123; these read STQL…PQPV and ACDV…DMAK.

The protein belongs to the MraZ family. Forms oligomers.

It localises to the cytoplasm. Its subcellular location is the nucleoid. The protein is Transcriptional regulator MraZ of Nitrosomonas eutropha (strain DSM 101675 / C91 / Nm57).